We begin with the raw amino-acid sequence, 547 residues long: Serine/threonine-protein kinase RIO2 (547 aa).

Positions 97–273 (VGNQMGVGKE…RDVKCIREFF (177 aa)) constitute a Protein kinase domain. Lys123 provides a ligand contact to ATP. The active-site Proton acceptor is the Asp228. Phosphoserine is present on residues Ser332, Ser337, Ser350, Ser362, Ser385, and Ser390. Residues 352–385 (LEKEADPADESGGSWCCSSTDSKQIKDGGLPEES) form a disordered region. The Nuclear export signal signature appears at 399 to 408 (AVEEMERQVL). The interval 404 to 445 (ERQVLPHRSVTEFSEESRRTENDGQPGQRSPAGSEDCDDEPP) is disordered. 5 positions are modified to phosphoserine: Ser412, Ser417, Ser433, Ser437, and Ser543.

This sequence belongs to the protein kinase superfamily. RIO-type Ser/Thr kinase family. As to quaternary structure, associated with late 40S pre-ribosomal particles. Interacts with PLK1 (via its N-terminus). Mg(2+) is required as a cofactor. In terms of processing, autophosphorylated (in vitro). Phosphorylation affects the timing of the metaphase-anaphase transition.

Its subcellular location is the cytoplasm. It carries out the reaction L-seryl-[protein] + ATP = O-phospho-L-seryl-[protein] + ADP + H(+). The catalysed reaction is L-threonyl-[protein] + ATP = O-phospho-L-threonyl-[protein] + ADP + H(+). In terms of biological role, serine/threonine-protein kinase involved in the final steps of cytoplasmic maturation of the 40S ribosomal subunit. Involved in export of the 40S pre-ribosome particles (pre-40S) from the nucleus to the cytoplasm. Its kinase activity is required for the release of NOB1, PNO1 and LTV1 from the late pre-40S and the processing of 18S-E pre-rRNA to the mature 18S rRNA. May regulate the timing of the metaphase-anaphase transition during mitotic progression, and its phosphorylation, may regulate this function. This is Serine/threonine-protein kinase RIO2 (Riok2) from Mus musculus (Mouse).